We begin with the raw amino-acid sequence, 210 residues long: ATP-dependent dethiobiotin synthetase BioD (210 aa).

12-17 is an ATP binding site; the sequence is NVGKTH. A Mg(2+)-binding site is contributed by Thr16. Residue Lys37 is part of the active site. Residue Thr41 coordinates substrate. Glu114 serves as a coordination point for Mg(2+). 114 to 117 is a binding site for ATP; it reads EGAG.

It belongs to the dethiobiotin synthetase family. As to quaternary structure, homodimer. The cofactor is Mg(2+).

The protein resides in the cytoplasm. The catalysed reaction is (7R,8S)-7,8-diammoniononanoate + CO2 + ATP = (4R,5S)-dethiobiotin + ADP + phosphate + 3 H(+). The protein operates within cofactor biosynthesis; biotin biosynthesis; biotin from 7,8-diaminononanoate: step 1/2. Its function is as follows. Catalyzes a mechanistically unusual reaction, the ATP-dependent insertion of CO2 between the N7 and N8 nitrogen atoms of 7,8-diaminopelargonic acid (DAPA, also called 7,8-diammoniononanoate) to form a ureido ring. The protein is ATP-dependent dethiobiotin synthetase BioD of Sulfurovum sp. (strain NBC37-1).